Here is a 383-residue protein sequence, read N- to C-terminus: Arginine biosynthesis bifunctional protein ArgJ (383 aa).

Substrate is bound by residues T146, K168, T179, E259, N378, and S383. The Nucleophile role is filled by T179.

This sequence belongs to the ArgJ family. In terms of assembly, heterotetramer of two alpha and two beta chains.

The protein resides in the cytoplasm. It catalyses the reaction N(2)-acetyl-L-ornithine + L-glutamate = N-acetyl-L-glutamate + L-ornithine. It carries out the reaction L-glutamate + acetyl-CoA = N-acetyl-L-glutamate + CoA + H(+). It participates in amino-acid biosynthesis; L-arginine biosynthesis; L-ornithine and N-acetyl-L-glutamate from L-glutamate and N(2)-acetyl-L-ornithine (cyclic): step 1/1. The protein operates within amino-acid biosynthesis; L-arginine biosynthesis; N(2)-acetyl-L-ornithine from L-glutamate: step 1/4. Catalyzes two activities which are involved in the cyclic version of arginine biosynthesis: the synthesis of N-acetylglutamate from glutamate and acetyl-CoA as the acetyl donor, and of ornithine by transacetylation between N(2)-acetylornithine and glutamate. In Streptomyces coelicolor (strain ATCC BAA-471 / A3(2) / M145), this protein is Arginine biosynthesis bifunctional protein ArgJ.